Reading from the N-terminus, the 574-residue chain is Secreted lipase 1 (574 aa).

A signal peptide spans 1–17 (MKLSLVPIFALLSTAFA). Cysteines 95 and 132 form a disulfide. The active-site Acyl-ester intermediate is Ser244. Cys303 and Cys312 form a disulfide bridge. An N-linked (GlcNAc...) asparagine glycan is attached at Asn323. Glu376 (charge relay system) is an active-site residue. The N-linked (GlcNAc...) asparagine glycan is linked to Asn386. The active-site Charge relay system is His489. Residue Asn524 is glycosylated (N-linked (GlcNAc...) asparagine).

Belongs to the type-B carboxylesterase/lipase family.

It localises to the secreted. The enzyme catalyses a carboxylic ester + H2O = an alcohol + a carboxylate + H(+). Its function is as follows. Secreted lipase that allows the use of hydrolyzed lipids as carbon sources. Has highest activity with methyl umbelliferyl oleate (C18:1), whereas much lower activities are obtained with the respective esters of palmitate (C16:0) and stearate (C18:0) (24% and 12% of the activity obtained with umbelliferyl oleate, respectively). Hydrolyzes 1- and 3-positioned ester bonds in preference to 2-positioned ester bonds. The production rate of monoglycerides is lower than that of diacylglycerides. Seems not required for the penetration of intact host tissue. The sequence is that of Secreted lipase 1 from Botryotinia fuckeliana (strain B05.10) (Noble rot fungus).